Here is a 446-residue protein sequence, read N- to C-terminus: MLITVVGLNHRTAPLAVREKLSFPEHTLKEVLRGLSDREGVESCVVISTCNRTEVYAVLSEEDGLQNIWCFLAERCGSPVEAIKSHTYNYSFGESVRHLFRVSSGLDSMVLGETQILGQVKQAYQFAQQVGTVNWLLNCAFQQALAVGKRVRTETGIDKNPVSISYAAVELARQTLGSLEGREVLIVGAGKMSELTVKHLLSHGVAGVIVSNRSYPRAVELAAQFGGRAVRFDELYRWMGHADIVISCTAASHYVIRAEPMTSVLAERGGRAIFFIDIAVPRDVDPAVGHLPGVVLYDIDSLQSVVDANLAERRRAAVAAERIIDAEVREFLLALGSRFVIPTVVALKKRGEEIKRNELDRALNRLGGELSERELKVISSMANSIVSQLLHEPITRLKKLALTPEGHFYSDALQKLFNLEPENGGVPTLVGRTESCPVSCLKGKGC.

Residues 49 to 52, Ser108, 113 to 115, and Gln119 each bind substrate; these read TCNR and ETQ. The active-site Nucleophile is the Cys50. 188 to 193 provides a ligand contact to NADP(+); that stretch reads GAGKMS.

This sequence belongs to the glutamyl-tRNA reductase family. As to quaternary structure, homodimer.

It carries out the reaction (S)-4-amino-5-oxopentanoate + tRNA(Glu) + NADP(+) = L-glutamyl-tRNA(Glu) + NADPH + H(+). It functions in the pathway porphyrin-containing compound metabolism; protoporphyrin-IX biosynthesis; 5-aminolevulinate from L-glutamyl-tRNA(Glu): step 1/2. In terms of biological role, catalyzes the NADPH-dependent reduction of glutamyl-tRNA(Glu) to glutamate 1-semialdehyde (GSA). This Desulforudis audaxviator (strain MP104C) protein is Glutamyl-tRNA reductase.